Consider the following 287-residue polypeptide: Aquaporin PIP1-1 (287 aa).

The next 2 helical transmembrane spans lie at 57–77 (IAEF…VMGV) and 92–114 (IAWS…SGHI). The NPA 1 signature appears at 115–117 (NPA). The next 3 membrane-spanning stretches (helical) occupy residues 134–154 (VFYI…VKGF), 176–196 (GDGL…VFSA), and 210–230 (ILAP…TMGI). Residues 236 to 238 (NPA) carry the NPA 2 motif. A helical transmembrane segment spans residues 258 to 278 (IFWVGPFIGAALAAIYHQVII).

Belongs to the MIP/aquaporin (TC 1.A.8) family. PIP (TC 1.A.8.11) subfamily. May interact with PIP1-2 to form heteromers. As to expression, highly expressed in roots, shoots and developing tassels, and at lower levels in leaves.

It is found in the cell membrane. Functionally, water channel required to facilitate the transport of water across cell membrane. Active as heteromers with PIP1-2, but not as homomers. This chain is Aquaporin PIP1-1 (PIP1-1), found in Zea mays (Maize).